Consider the following 430-residue polypeptide: tRNA(Ile)-lysidine synthase (430 aa).

21-26 (SGGLDS) provides a ligand contact to ATP.

The protein belongs to the tRNA(Ile)-lysidine synthase family.

The protein resides in the cytoplasm. The catalysed reaction is cytidine(34) in tRNA(Ile2) + L-lysine + ATP = lysidine(34) in tRNA(Ile2) + AMP + diphosphate + H(+). Its function is as follows. Ligates lysine onto the cytidine present at position 34 of the AUA codon-specific tRNA(Ile) that contains the anticodon CAU, in an ATP-dependent manner. Cytidine is converted to lysidine, thus changing the amino acid specificity of the tRNA from methionine to isoleucine. This is tRNA(Ile)-lysidine synthase from Salmonella typhimurium (strain LT2 / SGSC1412 / ATCC 700720).